Here is a 181-residue protein sequence, read N- to C-terminus: CDP-archaeol synthase (181 aa).

5 helical membrane-spanning segments follow: residues V7–A27, L55–V75, L88–L108, L126–E146, and T147–T167.

It belongs to the CDP-archaeol synthase family. Mg(2+) is required as a cofactor.

The protein localises to the cell membrane. The catalysed reaction is 2,3-bis-O-(geranylgeranyl)-sn-glycerol 1-phosphate + CTP + H(+) = CDP-2,3-bis-O-(geranylgeranyl)-sn-glycerol + diphosphate. It participates in membrane lipid metabolism; glycerophospholipid metabolism. In terms of biological role, catalyzes the formation of CDP-2,3-bis-(O-geranylgeranyl)-sn-glycerol (CDP-archaeol) from 2,3-bis-(O-geranylgeranyl)-sn-glycerol 1-phosphate (DGGGP) and CTP. This reaction is the third ether-bond-formation step in the biosynthesis of archaeal membrane lipids. The protein is CDP-archaeol synthase of Haloarcula marismortui (strain ATCC 43049 / DSM 3752 / JCM 8966 / VKM B-1809) (Halobacterium marismortui).